Consider the following 467-residue polypeptide: Pachytene checkpoint protein 2 homolog (467 aa).

G209–T216 lines the ATP pocket.

Belongs to the AAA ATPase family. PCH2 subfamily.

It is found in the chromosome. Plays a key role in chromosome recombination during meiosis. Mediates meiotic chromosome remodeling and crossover maturation. The chain is Pachytene checkpoint protein 2 homolog from Arabidopsis thaliana (Mouse-ear cress).